We begin with the raw amino-acid sequence, 426 residues long: Dihydroorotase (426 aa).

Zn(2+) is bound by residues histidine 58 and histidine 60. Substrate is bound by residues 60–62 (HLR) and asparagine 92. 3 residues coordinate Zn(2+): aspartate 150, histidine 177, and histidine 230. Asparagine 276 is a binding site for substrate. A Zn(2+)-binding site is contributed by aspartate 303. Residue aspartate 303 is part of the active site. Residues histidine 307 and 321-322 (FG) each bind substrate.

It belongs to the metallo-dependent hydrolases superfamily. DHOase family. Class I DHOase subfamily. Zn(2+) is required as a cofactor.

It carries out the reaction (S)-dihydroorotate + H2O = N-carbamoyl-L-aspartate + H(+). It participates in pyrimidine metabolism; UMP biosynthesis via de novo pathway; (S)-dihydroorotate from bicarbonate: step 3/3. Functionally, catalyzes the reversible cyclization of carbamoyl aspartate to dihydroorotate. This is Dihydroorotase from Listeria innocua serovar 6a (strain ATCC BAA-680 / CLIP 11262).